We begin with the raw amino-acid sequence, 320 residues long: ATP-dependent 6-phosphofructokinase (320 aa).

Glycine 12 contributes to the ATP binding site. Position 22–26 (22–26 (RGVVR)) interacts with ADP. ATP contacts are provided by residues 73–74 (RF) and 103–106 (GDGS). Position 104 (aspartate 104) interacts with Mg(2+). 126–128 (TID) contacts substrate. Catalysis depends on aspartate 128, which acts as the Proton acceptor. Position 155 (arginine 155) interacts with ADP. Substrate is bound by residues arginine 163 and 170 to 172 (MGR). ADP-binding positions include 186 to 188 (GCE), lysine 212, and 214 to 216 (KKH). Substrate is bound by residues glutamate 223, arginine 244, and 250 to 253 (HIQR).

The protein belongs to the phosphofructokinase type A (PFKA) family. ATP-dependent PFK group I subfamily. Prokaryotic clade 'B1' sub-subfamily. Homotetramer. It depends on Mg(2+) as a cofactor.

The protein localises to the cytoplasm. The enzyme catalyses beta-D-fructose 6-phosphate + ATP = beta-D-fructose 1,6-bisphosphate + ADP + H(+). It participates in carbohydrate degradation; glycolysis; D-glyceraldehyde 3-phosphate and glycerone phosphate from D-glucose: step 3/4. Its activity is regulated as follows. Allosterically activated by ADP and other diphosphonucleosides, and allosterically inhibited by phosphoenolpyruvate. Its function is as follows. Catalyzes the phosphorylation of D-fructose 6-phosphate to fructose 1,6-bisphosphate by ATP, the first committing step of glycolysis. The chain is ATP-dependent 6-phosphofructokinase from Vibrio campbellii (strain ATCC BAA-1116).